Here is a 131-residue protein sequence, read N- to C-terminus: Lysozyme C (131 aa).

Positions 2–131 constitute a C-type lysozyme domain; sequence KIYEQCELAR…VSQWIKGCKL (130 aa). Intrachain disulfides connect Cys-7-Cys-129, Cys-31-Cys-117, Cys-66-Cys-82, and Cys-78-Cys-96. Catalysis depends on residues Glu-36 and Asp-54.

It belongs to the glycosyl hydrolase 22 family. Monomer.

The protein resides in the secreted. It carries out the reaction Hydrolysis of (1-&gt;4)-beta-linkages between N-acetylmuramic acid and N-acetyl-D-glucosamine residues in a peptidoglycan and between N-acetyl-D-glucosamine residues in chitodextrins.. In terms of biological role, lysozymes have primarily a bacteriolytic function; those in tissues and body fluids are associated with the monocyte-macrophage system and enhance the activity of immunoagents. Has strong bacteriolytic activity against M.luteus and V.cholerae, weak bacteriolytic activity against P.aeruginosa and no activity against A.hydrophila. This chain is Lysozyme C (LYZ), found in Pelodiscus sinensis (Chinese softshell turtle).